Reading from the N-terminus, the 243-residue chain is Small ribosomal subunit protein eS4 (243 aa).

Residues 43 to 105 (IPLIYIVRDY…TGEHYRVLPN (63 aa)) enclose the S4 RNA-binding domain.

The protein belongs to the eukaryotic ribosomal protein eS4 family. In terms of assembly, part of the 30S ribosomal subunit.

The chain is Small ribosomal subunit protein eS4 from Thermococcus kodakarensis (strain ATCC BAA-918 / JCM 12380 / KOD1) (Pyrococcus kodakaraensis (strain KOD1)).